We begin with the raw amino-acid sequence, 122 residues long: Small ribosomal subunit protein uS13 (122 aa).

The tract at residues 95 to 122 (GLPVHGQRTKTNARTRKGPARTVAGKKK) is disordered.

It belongs to the universal ribosomal protein uS13 family. As to quaternary structure, part of the 30S ribosomal subunit. Forms a loose heterodimer with protein S19. Forms two bridges to the 50S subunit in the 70S ribosome.

Its function is as follows. Located at the top of the head of the 30S subunit, it contacts several helices of the 16S rRNA. In the 70S ribosome it contacts the 23S rRNA (bridge B1a) and protein L5 of the 50S subunit (bridge B1b), connecting the 2 subunits; these bridges are implicated in subunit movement. Contacts the tRNAs in the A and P-sites. The chain is Small ribosomal subunit protein uS13 from Geotalea uraniireducens (strain Rf4) (Geobacter uraniireducens).